The primary structure comprises 244 residues: Ras-like protein family member 11B (244 aa).

The interval 19 to 242 is small GTPase-like; that stretch reads PSSRVIKIAV…VLSAKVRTVT (224 aa). GTP-binding positions include 30–37, 77–81, and 142–145; these read GGSGVGKT, DTPGV, and NKAD. The interval 200 to 222 is disordered; it reads INATSSVTEKKRSPLIPRPKSPN.

Belongs to the small GTPase superfamily. Ras family.

The catalysed reaction is GTP + H2O = GDP + phosphate + H(+). This Danio rerio (Zebrafish) protein is Ras-like protein family member 11B.